We begin with the raw amino-acid sequence, 457 residues long: Bifunctional protein GlmU (457 aa).

A pyrophosphorylase region spans residues 1 to 229 (MYNCAIILAA…YEEIMGVNSR (229 aa)). UDP-N-acetyl-alpha-D-glucosamine contacts are provided by residues 8-11 (LAAG), K22, Q73, and 78-79 (GT). Position 103 (D103) interacts with Mg(2+). Residues G140, E155, N170, and N227 each contribute to the UDP-N-acetyl-alpha-D-glucosamine site. N227 is a binding site for Mg(2+). The linker stretch occupies residues 230–250 (VQLSEAEIVMRKRINHKHMVN). The interval 251–457 (GVTFIDCEST…WLDKKGLLKK (207 aa)) is N-acetyltransferase. Residues R332 and K350 each coordinate UDP-N-acetyl-alpha-D-glucosamine. Catalysis depends on H362, which acts as the Proton acceptor. UDP-N-acetyl-alpha-D-glucosamine-binding residues include Y365 and N376. Acetyl-CoA is bound by residues 385 to 386 (NY), A422, and R439.

This sequence in the N-terminal section; belongs to the N-acetylglucosamine-1-phosphate uridyltransferase family. It in the C-terminal section; belongs to the transferase hexapeptide repeat family. As to quaternary structure, homotrimer. It depends on Mg(2+) as a cofactor.

Its subcellular location is the cytoplasm. It carries out the reaction alpha-D-glucosamine 1-phosphate + acetyl-CoA = N-acetyl-alpha-D-glucosamine 1-phosphate + CoA + H(+). The catalysed reaction is N-acetyl-alpha-D-glucosamine 1-phosphate + UTP + H(+) = UDP-N-acetyl-alpha-D-glucosamine + diphosphate. It functions in the pathway nucleotide-sugar biosynthesis; UDP-N-acetyl-alpha-D-glucosamine biosynthesis; N-acetyl-alpha-D-glucosamine 1-phosphate from alpha-D-glucosamine 6-phosphate (route II): step 2/2. Its pathway is nucleotide-sugar biosynthesis; UDP-N-acetyl-alpha-D-glucosamine biosynthesis; UDP-N-acetyl-alpha-D-glucosamine from N-acetyl-alpha-D-glucosamine 1-phosphate: step 1/1. The protein operates within bacterial outer membrane biogenesis; LPS lipid A biosynthesis. Its function is as follows. Catalyzes the last two sequential reactions in the de novo biosynthetic pathway for UDP-N-acetylglucosamine (UDP-GlcNAc). The C-terminal domain catalyzes the transfer of acetyl group from acetyl coenzyme A to glucosamine-1-phosphate (GlcN-1-P) to produce N-acetylglucosamine-1-phosphate (GlcNAc-1-P), which is converted into UDP-GlcNAc by the transfer of uridine 5-monophosphate (from uridine 5-triphosphate), a reaction catalyzed by the N-terminal domain. The sequence is that of Bifunctional protein GlmU from Clostridium botulinum (strain 657 / Type Ba4).